Consider the following 225-residue polypeptide: NAD(P)H-quinone oxidoreductase subunit K, chloroplastic (225 aa).

[4Fe-4S] cluster is bound by residues Cys-43, Cys-44, Cys-108, and Cys-139.

This sequence belongs to the complex I 20 kDa subunit family. In terms of assembly, NDH is composed of at least 16 different subunits, 5 of which are encoded in the nucleus. The cofactor is [4Fe-4S] cluster.

It is found in the plastid. Its subcellular location is the chloroplast thylakoid membrane. It carries out the reaction a plastoquinone + NADH + (n+1) H(+)(in) = a plastoquinol + NAD(+) + n H(+)(out). The catalysed reaction is a plastoquinone + NADPH + (n+1) H(+)(in) = a plastoquinol + NADP(+) + n H(+)(out). Its function is as follows. NDH shuttles electrons from NAD(P)H:plastoquinone, via FMN and iron-sulfur (Fe-S) centers, to quinones in the photosynthetic chain and possibly in a chloroplast respiratory chain. The immediate electron acceptor for the enzyme in this species is believed to be plastoquinone. Couples the redox reaction to proton translocation, and thus conserves the redox energy in a proton gradient. The protein is NAD(P)H-quinone oxidoreductase subunit K, chloroplastic of Lemna minor (Common duckweed).